Reading from the N-terminus, the 399-residue chain is MTRIGTPLSPSATRVMLLGAGELGKEVIIALQRLGVEVIAVDRYENAPGHQVAHRAHVIPMTDASALRELVLREKPDLIVPEIEAIATDELARIEAEGIARVIPTARATQLTMNREGIRRLAAEELGLQTSRYAFADSLESLTAAIDGGIGYPCIIKPVMSSSGKGQSLVADASELTRAWDYARSAGRVDQGRVIVEAVVEFDFEITLLTVRSRGGDGNIRTDFCAPVGHRQVKGDYVESWQPQPMSETALDTAREMAAAVTGALGGQGLFGVEFFVRGDEVWFSEVSPRPHDTGLVTLATQWQSEFELHARAILGLPVDTRLRNPGASAVIYGGVEAQGVAFENVDQALAVPGTDIRLFGKPEAFERRRMGVAVAHGDDIEDCRARAREAAGRVRVVV.

Residues 22–23 (EL) and Glu82 each bind N(1)-(5-phospho-beta-D-ribosyl)glycinamide. ATP-binding positions include Arg115, Lys157, 162–167 (SSGKGQ), 197–200 (EAVV), and Glu205. The ATP-grasp domain maps to 120 to 315 (RLAAEELGLQ…EFELHARAIL (196 aa)). Glu274 and Glu286 together coordinate Mg(2+). N(1)-(5-phospho-beta-D-ribosyl)glycinamide is bound by residues Asp293, Lys362, and 369–370 (RR).

This sequence belongs to the PurK/PurT family. Homodimer.

The enzyme catalyses N(1)-(5-phospho-beta-D-ribosyl)glycinamide + formate + ATP = N(2)-formyl-N(1)-(5-phospho-beta-D-ribosyl)glycinamide + ADP + phosphate + H(+). Its pathway is purine metabolism; IMP biosynthesis via de novo pathway; N(2)-formyl-N(1)-(5-phospho-D-ribosyl)glycinamide from N(1)-(5-phospho-D-ribosyl)glycinamide (formate route): step 1/1. Involved in the de novo purine biosynthesis. Catalyzes the transfer of formate to 5-phospho-ribosyl-glycinamide (GAR), producing 5-phospho-ribosyl-N-formylglycinamide (FGAR). Formate is provided by PurU via hydrolysis of 10-formyl-tetrahydrofolate. This Thioalkalivibrio sulfidiphilus (strain HL-EbGR7) protein is Formate-dependent phosphoribosylglycinamide formyltransferase.